The following is a 115-amino-acid chain: 5-hydroxyisourate hydrolase (115 aa).

The tract at residues 1–23 (MSGLTTHILDQASGKPAAGVGVR) is disordered. 3 residues coordinate substrate: His-7, Arg-45, and Tyr-112.

It belongs to the transthyretin family. 5-hydroxyisourate hydrolase subfamily. As to quaternary structure, homotetramer.

The enzyme catalyses 5-hydroxyisourate + H2O = 5-hydroxy-2-oxo-4-ureido-2,5-dihydro-1H-imidazole-5-carboxylate + H(+). Catalyzes the hydrolysis of 5-hydroxyisourate (HIU) to 2-oxo-4-hydroxy-4-carboxy-5-ureidoimidazoline (OHCU). The protein is 5-hydroxyisourate hydrolase of Caulobacter vibrioides (strain ATCC 19089 / CIP 103742 / CB 15) (Caulobacter crescentus).